A 622-amino-acid chain; its full sequence is 1-deoxy-D-xylulose-5-phosphate synthase (622 aa).

Thiamine diphosphate is bound by residues His80 and 121 to 123; that span reads GHS. Asp152 is a binding site for Mg(2+). Residues 153–154, Asn181, Tyr288, and Glu370 each bind thiamine diphosphate; that span reads GA. Asn181 is a binding site for Mg(2+).

The protein belongs to the transketolase family. DXPS subfamily. Homodimer. The cofactor is Mg(2+). Requires thiamine diphosphate as cofactor.

The catalysed reaction is D-glyceraldehyde 3-phosphate + pyruvate + H(+) = 1-deoxy-D-xylulose 5-phosphate + CO2. Its pathway is metabolic intermediate biosynthesis; 1-deoxy-D-xylulose 5-phosphate biosynthesis; 1-deoxy-D-xylulose 5-phosphate from D-glyceraldehyde 3-phosphate and pyruvate: step 1/1. Functionally, catalyzes the acyloin condensation reaction between C atoms 2 and 3 of pyruvate and glyceraldehyde 3-phosphate to yield 1-deoxy-D-xylulose-5-phosphate (DXP). The protein is 1-deoxy-D-xylulose-5-phosphate synthase of Shewanella denitrificans (strain OS217 / ATCC BAA-1090 / DSM 15013).